The sequence spans 149 residues: Chromophore lyase CpcS/CpeS homolog (149 aa).

The protein belongs to the CpcS/CpeS biliprotein lyase family.

Its subcellular location is the plastid. The protein localises to the chloroplast. Might function to covalently attach a chromophore to Cys residue(s) of phycobiliproteins. The sequence is that of Chromophore lyase CpcS/CpeS homolog from Pyropia yezoensis (Susabi-nori).